Consider the following 112-residue polypeptide: Nitrogen regulatory protein P-II 1 (112 aa).

Tyr-51 is modified (O-UMP-tyrosine).

It belongs to the P(II) protein family. As to quaternary structure, homotrimer. In terms of processing, uridylylated/deuridylylated by GlnD.

Its function is as follows. P-II indirectly controls the transcription of the glutamine synthetase gene (GlnA). P-II prevents NR-II-catalyzed conversion of NR-I to NR-I-phosphate, the transcriptional activator of GlnA. When P-II is uridylylated to P-II-UMP, these events are reversed. When the ratio of Gln to 2-ketoglutarate decreases, P-II is uridylylated to P-II-UMP, which causes the deadenylation of glutamine synthetase by GlnE, so activating the enzyme. This is Nitrogen regulatory protein P-II 1 (glnB) from Escherichia coli O157:H7.